Consider the following 611-residue polypeptide: MRGRSEGGKKKPVIVLLCVASVVLVFVYLFFGSSNHKAIEYGRKLGLGGDDDDSTKKDDTSSSFYVEDVVGNGFTPRSFPVCDDRHSELIPCLDRNLIYQMRLKLDLSLMEHYERHCPPPERRFNCLIPPPPGYKIPIKWPKSRDEVWKVNIPHTHLAHEKSDQNWMVVKGEKINFPGGGTHFHYGADKYIASMANMLNFPNNVLNNGGRLRTFLDVGCGVASFGGYLLASEIMTMSLAPNDVHQNQIQFALERGIPAYLGVLGTKRLPYPSRSFELAHCSRCRIDWLQRDGILLLELDRVLRPGGYFAYSSPEAYAQDEEDLRIWREMSALVGRMCWTIAAKRNQTVIWQKPLTNDCYLGREPGTQPPLCNSDSDPDAVYGVNMEACITQYSDHDHKTKGSGLAPWPARLTSPPPRLADFGYSTDIFEKDTETWRQRVDTYWDLLSPKIQSDTVRNIMDMKASMGSFAAALKEKDVWVMNVVPEDGPNTLKLIYDRGLMGAVHSWCEAFSTYPRTYDLLHAWDIISDIKKRGCSAEDLLLEMDRILRPSGFILIRDKQSVVDLVKKYLKALHWEAVETKTASESDQDSDNVILIVQKKLWLTSESLRDLE.

Residues 1–11 are Cytoplasmic-facing; the sequence is MRGRSEGGKKK. Residues 12-32 traverse the membrane as a helical; Signal-anchor for type II membrane protein segment; sequence PVIVLLCVASVVLVFVYLFFG. Over 33-611 the chain is Lumenal; the sequence is SSNHKAIEYG…LTSESLRDLE (579 aa). N-linked (GlcNAc...) asparagine glycosylation occurs at N345.

The protein belongs to the methyltransferase superfamily.

Its subcellular location is the golgi apparatus membrane. This is Probable methyltransferase PMT1 from Arabidopsis thaliana (Mouse-ear cress).